We begin with the raw amino-acid sequence, 358 residues long: Peptide chain release factor 1 (358 aa).

Glutamine 233 carries the N5-methylglutamine modification.

This sequence belongs to the prokaryotic/mitochondrial release factor family. Post-translationally, methylated by PrmC. Methylation increases the termination efficiency of RF1.

Its subcellular location is the cytoplasm. Peptide chain release factor 1 directs the termination of translation in response to the peptide chain termination codons UAG and UAA. This chain is Peptide chain release factor 1, found in Blochmanniella floridana.